Here is a 20-residue protein sequence, read N- to C-terminus: Alkaline phosphatase (20 aa).

Expressed by the venom gland.

The protein resides in the secreted. It carries out the reaction a phosphate monoester + H2O = an alcohol + phosphate. In terms of biological role, has hemorrhagic activity. The polypeptide is Alkaline phosphatase (Deinagkistrodon acutus (Hundred-pace snake)).